The chain runs to 79 residues: Small proline-rich protein 4 (79 aa).

A compositionally biased stretch (low complexity) spans 1-26; the sequence is MSSQQQQRQQQQCPPQRAQQQQVKQP. The interval 1 to 79 is disordered; sequence MSSQQQQRQQ…AQQASKSKQK (79 aa). Over residues 66-79 the composition is skewed to polar residues; sequence KCPSAQQASKSKQK.

The protein belongs to the cornifin (SPRR) family. In terms of processing, cross-linked to membrane proteins by transglutaminase.

Its subcellular location is the cytoplasm. It localises to the cell cortex. Its function is as follows. Cross-linked envelope protein of keratinocytes. Involved in UV-induced cornification. The sequence is that of Small proline-rich protein 4 (SPRR4) from Homo sapiens (Human).